A 215-amino-acid polypeptide reads, in one-letter code: Recombination protein RecR (215 aa).

A C4-type zinc finger spans residues 74–89 (CQRCGHLSADPICDIC). The Toprim domain maps to 97–191 (GVICVVADSR…RVTRIAYGLP (95 aa)).

It belongs to the RecR family.

Its function is as follows. May play a role in DNA repair. It seems to be involved in an RecBC-independent recombinational process of DNA repair. It may act with RecF and RecO. This chain is Recombination protein RecR, found in Synechococcus sp. (strain RCC307).